The chain runs to 448 residues: Homogentisate 1,2-dioxygenase (448 aa).

Catalysis depends on His-303, which acts as the Proton acceptor. Residues His-346 and Glu-352 each contribute to the Fe cation site. Homogentisate-binding residues include Tyr-361 and His-382. His-382 provides a ligand contact to Fe cation.

It belongs to the homogentisate dioxygenase family. As to quaternary structure, hexamer; dimer of trimers. The cofactor is Fe cation.

The enzyme catalyses homogentisate + O2 = 4-maleylacetoacetate + H(+). It functions in the pathway amino-acid degradation; L-phenylalanine degradation; acetoacetate and fumarate from L-phenylalanine: step 4/6. Functionally, involved in the catabolism of homogentisate (2,5-dihydroxyphenylacetate or 2,5-OH-PhAc), a central intermediate in the degradation of phenylalanine and tyrosine. Catalyzes the oxidative ring cleavage of the aromatic ring of homogentisate to yield maleylacetoacetate. This is Homogentisate 1,2-dioxygenase from Nitrobacter hamburgensis (strain DSM 10229 / NCIMB 13809 / X14).